We begin with the raw amino-acid sequence, 298 residues long: uncharacterized protein (298 aa).

In terms of domain architecture, HTH lysR-type spans 1–61 (MDIFISKKMR…TRKDNNISLN (61 aa)). The segment at residues 21–40 (IARAAEKIHMTASPFGKSIA) is a DNA-binding region (H-T-H motif).

It belongs to the LysR transcriptional regulatory family.

This is an uncharacterized protein from Escherichia coli (strain K12).